Here is a 1372-residue protein sequence, read N- to C-terminus: DNA-directed RNA polymerase subunit beta' (1372 aa).

Zn(2+) contacts are provided by Cys-69, Cys-71, Cys-84, and Cys-87. Asp-460, Asp-462, and Asp-464 together coordinate Mg(2+). Residues Cys-808, Cys-882, Cys-889, and Cys-892 each coordinate Zn(2+).

The protein belongs to the RNA polymerase beta' chain family. In terms of assembly, the RNAP catalytic core consists of 2 alpha, 1 beta, 1 beta' and 1 omega subunit. When a sigma factor is associated with the core the holoenzyme is formed, which can initiate transcription. Mg(2+) is required as a cofactor. It depends on Zn(2+) as a cofactor.

The enzyme catalyses RNA(n) + a ribonucleoside 5'-triphosphate = RNA(n+1) + diphosphate. Functionally, DNA-dependent RNA polymerase catalyzes the transcription of DNA into RNA using the four ribonucleoside triphosphates as substrates. The chain is DNA-directed RNA polymerase subunit beta' from Rickettsia akari (strain Hartford).